The following is a 214-amino-acid chain: STS14 protein (214 aa).

The signal sequence occupies residues 1–19 (MFVLSTAMACLVYIYIYIY). Repeat copies occupy residues 13–14 (YI), 15–16 (YI), and 17–18 (YI). The interval 13 to 18 (YIYIYI) is 3 X 2 AA tandem repeats of Y-I. Positions 80 to 200 (LDAHNKARSE…YEGPATLTVC (121 aa)) constitute an SCP domain.

It belongs to the CRISP family. As to expression, highly expressed in the stigma and stylar cortex throughout pistil development. Not expressed in other organs.

In terms of biological role, may protect the outer tissues of the pistil from pathogen attack. The protein is STS14 protein (STS14) of Solanum tuberosum (Potato).